Consider the following 139-residue polypeptide: Putative pre-16S rRNA nuclease (139 aa).

The protein belongs to the YqgF nuclease family.

It is found in the cytoplasm. Functionally, could be a nuclease involved in processing of the 5'-end of pre-16S rRNA. The chain is Putative pre-16S rRNA nuclease from Caldanaerobacter subterraneus subsp. tengcongensis (strain DSM 15242 / JCM 11007 / NBRC 100824 / MB4) (Thermoanaerobacter tengcongensis).